The following is a 476-amino-acid chain: Siroheme synthase (476 aa).

The interval 1–207 is precorrin-2 dehydrogenase /sirohydrochlorin ferrochelatase; that stretch reads MTANALFPLF…QRHAEAEAVL (207 aa). Residues 25 to 26 and 46 to 47 each bind NAD(+); these read KV and PS. Phosphoserine is present on S132. Positions 220–476 are uroporphyrinogen-III C-methyltransferase; sequence GSVTLVGAGA…SAPCPPARIL (257 aa). D252 functions as the Proton acceptor in the catalytic mechanism. The active-site Proton donor is K274. S-adenosyl-L-methionine-binding positions include 305 to 307, V310, 335 to 336, M387, and G416; these read GGD and TA.

It in the N-terminal section; belongs to the precorrin-2 dehydrogenase / sirohydrochlorin ferrochelatase family. The protein in the C-terminal section; belongs to the precorrin methyltransferase family.

The catalysed reaction is uroporphyrinogen III + 2 S-adenosyl-L-methionine = precorrin-2 + 2 S-adenosyl-L-homocysteine + H(+). It catalyses the reaction precorrin-2 + NAD(+) = sirohydrochlorin + NADH + 2 H(+). The enzyme catalyses siroheme + 2 H(+) = sirohydrochlorin + Fe(2+). It participates in cofactor biosynthesis; adenosylcobalamin biosynthesis; precorrin-2 from uroporphyrinogen III: step 1/1. Its pathway is cofactor biosynthesis; adenosylcobalamin biosynthesis; sirohydrochlorin from precorrin-2: step 1/1. The protein operates within porphyrin-containing compound metabolism; siroheme biosynthesis; precorrin-2 from uroporphyrinogen III: step 1/1. It functions in the pathway porphyrin-containing compound metabolism; siroheme biosynthesis; siroheme from sirohydrochlorin: step 1/1. It participates in porphyrin-containing compound metabolism; siroheme biosynthesis; sirohydrochlorin from precorrin-2: step 1/1. Multifunctional enzyme that catalyzes the SAM-dependent methylations of uroporphyrinogen III at position C-2 and C-7 to form precorrin-2 via precorrin-1. Then it catalyzes the NAD-dependent ring dehydrogenation of precorrin-2 to yield sirohydrochlorin. Finally, it catalyzes the ferrochelation of sirohydrochlorin to yield siroheme. The polypeptide is Siroheme synthase (Xylella fastidiosa (strain M12)).